We begin with the raw amino-acid sequence, 268 residues long: TodF product hydratase (268 aa).

It belongs to the hydratase/decarboxylase family.

The protein operates within xenobiotic degradation; toluene degradation. Functionally, converts the product of 2-hydroxy-6-oxo-2,4-heptadienoate hydrolase. In Pseudomonas putida (strain ATCC 700007 / DSM 6899 / JCM 31910 / BCRC 17059 / LMG 24140 / F1), this protein is TodF product hydratase (todJ).